A 215-amino-acid chain; its full sequence is Thymidylate kinase (215 aa).

Residue 7–14 (GLDGSGKT) participates in ATP binding.

Belongs to the thymidylate kinase family.

The catalysed reaction is dTMP + ATP = dTDP + ADP. Functionally, phosphorylation of dTMP to form dTDP in both de novo and salvage pathways of dTTP synthesis. The chain is Thymidylate kinase from Mycoplasmopsis agalactiae (strain NCTC 10123 / CIP 59.7 / PG2) (Mycoplasma agalactiae).